A 576-amino-acid chain; its full sequence is (E,E)-alpha-farnesene synthase (576 aa).

(2E,6E)-farnesyl diphosphate-binding residues include Arg-289, Asp-326, Asp-330, Arg-468, and Asn-471. The Mg(2+) site is built by Asp-326 and Asp-330. The DDXXD motif motif lies at 326–330 (DDVYD). The Mg(2+) site is built by Asn-471, Thr-475, and Glu-479. Residues Asp-484 and Ser-487 each coordinate K(+).

It belongs to the terpene synthase family. Tpsb subfamily. As to quaternary structure, monomer. The cofactor is Mg(2+). Mn(2+) serves as cofactor. Requires K(+) as cofactor.

It is found in the cytoplasm. The enzyme catalyses (2E,6E)-farnesyl diphosphate = (3E,6E)-alpha-farnesene + diphosphate. Sesquiterpene synthase catalyzing the production of (E,E)-alpha-farnesene, the predominant terpene produced during storage of fruits. Produces all six isomers (E,E)-alpha-farnesene, (Z,E)-alpha-farnesene, (E,Z)-alpha-farnesene, (Z,Z)-alpha-farnesene, (E)-beta-farnesene and (Z)-beta-farnesene from a mix of isomeric forms of the farnesyl diphosphate precursor. Able to convert geranyl diphosphate to the monoterpenes (E)-beta-ocimene, linalool and beta-myrcene. Also has a prenyltransferase activity producing alpha-farnesene directly from geranyl diphosphate and isoprenyl diphosphate. The polypeptide is (E,E)-alpha-farnesene synthase (AFS1) (Malus domestica (Apple)).